Here is a 156-residue protein sequence, read N- to C-terminus: SsrA-binding protein (156 aa).

Positions 135 to 156 (HALRERQDRREADRAMSERKDR) are disordered.

It belongs to the SmpB family.

Its subcellular location is the cytoplasm. Functionally, required for rescue of stalled ribosomes mediated by trans-translation. Binds to transfer-messenger RNA (tmRNA), required for stable association of tmRNA with ribosomes. tmRNA and SmpB together mimic tRNA shape, replacing the anticodon stem-loop with SmpB. tmRNA is encoded by the ssrA gene; the 2 termini fold to resemble tRNA(Ala) and it encodes a 'tag peptide', a short internal open reading frame. During trans-translation Ala-aminoacylated tmRNA acts like a tRNA, entering the A-site of stalled ribosomes, displacing the stalled mRNA. The ribosome then switches to translate the ORF on the tmRNA; the nascent peptide is terminated with the 'tag peptide' encoded by the tmRNA and targeted for degradation. The ribosome is freed to recommence translation, which seems to be the essential function of trans-translation. This Kineococcus radiotolerans (strain ATCC BAA-149 / DSM 14245 / SRS30216) protein is SsrA-binding protein.